The sequence spans 95 residues: Small ribosomal subunit protein uS17 (95 aa).

It belongs to the universal ribosomal protein uS17 family. Part of the 30S ribosomal subunit.

Functionally, one of the primary rRNA binding proteins, it binds specifically to the 5'-end of 16S ribosomal RNA. This is Small ribosomal subunit protein uS17 from Synechococcus sp. (strain CC9902).